A 244-amino-acid polypeptide reads, in one-letter code: Acidic leucine-rich nuclear phosphoprotein 32 family member A (244 aa).

LRR repeat units follow at residues 18–41, 43–64, 65–87, and 89–110; these read DVKE…TDEF, GLEF…PKLN, KLKK…AEKC, and NLTH…EPLK. The LRRCT domain occupies 123 to 161; that stretch reads CEVTNLNDYRENLFKLLPQLTYLDGYDRDDKEAPDSDAE. Residues 148–244 are disordered; sequence YDRDDKEAPD…DQDDEGEDDD (97 aa). Positions 157–227 are enriched in acidic residues; sequence DSDAEGYVEG…EEDEGDEEAE (71 aa).

It belongs to the ANP32 family. Phosphorylated on serine residues.

The protein localises to the nucleus. Its subcellular location is the cytoplasm. The protein resides in the endoplasmic reticulum. Implicated in a number of cellular processes, including proliferation, differentiation, caspase-dependent and caspase-independent apoptosis, suppression of transformation (tumor suppressor), inhibition of protein phosphatase 2A, regulation of mRNA trafficking and stability, and inhibition of acetyltransferases as part of the INHAT (inhibitor of histone acetyltransferases) complex. The chain is Acidic leucine-rich nuclear phosphoprotein 32 family member A (anp32a) from Xenopus laevis (African clawed frog).